A 1062-amino-acid polypeptide reads, in one-letter code: Integrin alpha-8 (1062 aa).

Residues 1–35 (MSAGTHCGPPGNRAPPFARLCCVSAALGMLWSPAC) form the signal peptide. Residues 36 to 1010 (LAFNLDVDKL…ATPNVSFSIP (975 aa)) are Extracellular-facing. 7 FG-GAP repeats span residues 41–104 (DVDK…RSAQ), 121–182 (NGTK…AYAE), 187–239 (RNSN…IANY), 252–305 (KQTD…STDM), 306–371 (TFIQ…LLFQ), 372–430 (DPQV…GLHS), and 434–497 (QVLQ…LHPM). An N-linked (GlcNAc...) asparagine glycan is attached at Asn-80. The cysteines at positions 95 and 105 are disulfide-linked. Residue Asn-121 is glycosylated (N-linked (GlcNAc...) asparagine). Cys-149 and Cys-170 form a disulfide bridge. A glycan (N-linked (GlcNAc...) asparagine) is linked at Asn-176. Cys-186 and Cys-199 are disulfide-bonded. An N-linked (GlcNAc...) asparagine glycan is attached at Asn-238. Residues Glu-274, Thr-276, Asp-278, and Glu-282 each contribute to the Ca(2+) site. N-linked (GlcNAc...) asparagine glycans are attached at residues Asn-301 and Asn-310. Ca(2+) is bound by residues Asp-328, Asn-330, Asp-332, Asp-336, Asp-394, Asn-396, Asp-398, Tyr-400, and Asp-402. A Cell attachment site motif is present at residues 454-456 (RGD). The Ca(2+) site is built by Asp-458, Asp-460, Asn-462, Tyr-464, and Asp-466. N-linked (GlcNAc...) asparagine glycosylation is present at Asn-503. Disulfide bonds link Cys-506/Cys-517 and Cys-523/Cys-579. Asn-600 and Asn-604 each carry an N-linked (GlcNAc...) asparagine glycan. Cystine bridges form between Cys-640/Cys-646 and Cys-712/Cys-725. N-linked (GlcNAc...) asparagine glycosylation is found at Asn-718, Asn-736, Asn-752, Asn-779, Asn-895, and Asn-922. 2 cysteine pairs are disulfide-bonded: Cys-866–Cys-923 and Cys-928–Cys-933. Asn-1004 carries N-linked (GlcNAc...) asparagine glycosylation. Residues 1011 to 1031 (LWVIILAILLGLLVLAILTLA) traverse the membrane as a helical segment. Residues 1032–1062 (LWKCGFFDRARPPQDEMTDREQLTSDKTPEA) lie on the Cytoplasmic side of the membrane.

The protein belongs to the integrin alpha chain family. In terms of assembly, heterodimer of an alpha and a beta subunit. The alpha subunit is composed of a heavy and a light chain linked by a disulfide bond. Alpha-8 associates with beta-1. As to expression, in brain, expressed in deep cortex, hippocampal CA1, basolateral amygdala and striatum. In kidney, expressed in glomerular mesengium (at protein level).

The protein localises to the membrane. The protein resides in the cell membrane. Integrin alpha-8/beta-1 functions in the genesis of kidney and probably of other organs by regulating the recruitment of mesenchymal cells into epithelial structures. It recognizes the sequence R-G-D in a wide array of ligands including TNC, FN1, SPP1 TGFB1, TGFB3 and VTN. NPNT is probably its functional ligand in kidney genesis. Neuronal receptor for TNC it mediates cell-cell interactions and regulates neurite outgrowth of sensory and motor neurons. The polypeptide is Integrin alpha-8 (Itga8) (Mus musculus (Mouse)).